A 224-amino-acid chain; its full sequence is MSTMPEDIAAAQRLEQACQSLGLAAGAEQQEKLLRYMAQMQRWNRTYNLTAIRDPEQMLIQHLFDSLSVVQPLVRALQAGQPAKVYDVGSGGGLPGVVLAIVQPEWDITCVDAVEKKTAFVQQMAGTLMLPNLHAMHARIERVAPADCDVVISRAFASLHDFANLAGRHVRPGGTLVAMKGKVPAEEIEGLPAAWQVERIEPLQVPELDAERCLIWMRRSQGTL.

S-adenosyl-L-methionine-binding positions include Gly89, Leu94, Ile140 to Glu141, and Arg154.

Belongs to the methyltransferase superfamily. RNA methyltransferase RsmG family.

The protein localises to the cytoplasm. It carries out the reaction guanosine(527) in 16S rRNA + S-adenosyl-L-methionine = N(7)-methylguanosine(527) in 16S rRNA + S-adenosyl-L-homocysteine. Specifically methylates the N7 position of guanine in position 527 of 16S rRNA. The sequence is that of Ribosomal RNA small subunit methyltransferase G from Bordetella avium (strain 197N).